The sequence spans 65 residues: UPF0434 protein Mpe_A2486 (65 aa).

It belongs to the UPF0434 family.

The chain is UPF0434 protein Mpe_A2486 from Methylibium petroleiphilum (strain ATCC BAA-1232 / LMG 22953 / PM1).